The primary structure comprises 130 residues: Glycine cleavage system H protein (130 aa).

Residues 24–106 (TATVGITDFA…YGDGWMFKVK (83 aa)) form the Lipoyl-binding domain. Lys-65 carries the post-translational modification N6-lipoyllysine.

Belongs to the GcvH family. The glycine cleavage system is composed of four proteins: P, T, L and H. (R)-lipoate is required as a cofactor.

In terms of biological role, the glycine cleavage system catalyzes the degradation of glycine. The H protein shuttles the methylamine group of glycine from the P protein to the T protein. The polypeptide is Glycine cleavage system H protein (Marinobacter nauticus (strain ATCC 700491 / DSM 11845 / VT8) (Marinobacter aquaeolei)).